We begin with the raw amino-acid sequence, 443 residues long: Chromosomal replication initiator protein DnaA (443 aa).

The tract at residues 1–75 is domain I, interacts with DnaA modulators; that stretch reads MNTQLNEIWQ…AIKQVTFKEY (75 aa). Residues 75–105 are domain II; it reads YEIAFIVPSQENLNKLTKQTESAGNEDSPLS. Positions 106-321 are domain III, AAA+ region; sequence VLNPKYTFDT…GALNRVIAYS (216 aa). ATP is bound by residues G150, G152, K153, and T154. The domain IV, binds dsDNA stretch occupies residues 322 to 443; it reads SLTENEITVE…SEIKRNLLGK (122 aa).

This sequence belongs to the DnaA family. Oligomerizes as a right-handed, spiral filament on DNA at oriC.

Its subcellular location is the cytoplasm. In terms of biological role, plays an essential role in the initiation and regulation of chromosomal replication. ATP-DnaA binds to the origin of replication (oriC) to initiate formation of the DNA replication initiation complex once per cell cycle. Binds the DnaA box (a 9 base pair repeat at the origin) and separates the double-stranded (ds)DNA. Forms a right-handed helical filament on oriC DNA; dsDNA binds to the exterior of the filament while single-stranded (ss)DNA is stabiized in the filament's interior. The ATP-DnaA-oriC complex binds and stabilizes one strand of the AT-rich DNA unwinding element (DUE), permitting loading of DNA polymerase. After initiation quickly degrades to an ADP-DnaA complex that is not apt for DNA replication. Binds acidic phospholipids. This chain is Chromosomal replication initiator protein DnaA, found in Acetivibrio thermocellus (strain ATCC 27405 / DSM 1237 / JCM 9322 / NBRC 103400 / NCIMB 10682 / NRRL B-4536 / VPI 7372) (Clostridium thermocellum).